A 621-amino-acid polypeptide reads, in one-letter code: 1-deoxy-D-xylulose-5-phosphate synthase (621 aa).

Residues H80 and 121–123 (GHS) each bind thiamine diphosphate. Position 152 (D152) interacts with Mg(2+). Thiamine diphosphate is bound by residues 153–154 (GA), N181, Y288, and E370. Residue N181 coordinates Mg(2+).

It belongs to the transketolase family. DXPS subfamily. As to quaternary structure, homodimer. Requires Mg(2+) as cofactor. Thiamine diphosphate serves as cofactor.

The catalysed reaction is D-glyceraldehyde 3-phosphate + pyruvate + H(+) = 1-deoxy-D-xylulose 5-phosphate + CO2. It functions in the pathway metabolic intermediate biosynthesis; 1-deoxy-D-xylulose 5-phosphate biosynthesis; 1-deoxy-D-xylulose 5-phosphate from D-glyceraldehyde 3-phosphate and pyruvate: step 1/1. In terms of biological role, catalyzes the acyloin condensation reaction between C atoms 2 and 3 of pyruvate and glyceraldehyde 3-phosphate to yield 1-deoxy-D-xylulose-5-phosphate (DXP). The protein is 1-deoxy-D-xylulose-5-phosphate synthase of Edwardsiella ictaluri (strain 93-146).